The primary structure comprises 325 residues: Ribosomal RNA small subunit methyltransferase H (325 aa).

S-adenosyl-L-methionine is bound by residues 33-35, Asp52, Leu87, Asp101, and Gln108; that span reads GGH. The segment at 285-325 is disordered; sequence AEPAGEVEKADNPRAASVRLRAAERTAPNPDRTQPTIGGAS. Residues 315–325 are compositionally biased toward polar residues; it reads DRTQPTIGGAS.

The protein belongs to the methyltransferase superfamily. RsmH family.

It localises to the cytoplasm. It catalyses the reaction cytidine(1402) in 16S rRNA + S-adenosyl-L-methionine = N(4)-methylcytidine(1402) in 16S rRNA + S-adenosyl-L-homocysteine + H(+). Specifically methylates the N4 position of cytidine in position 1402 (C1402) of 16S rRNA. The protein is Ribosomal RNA small subunit methyltransferase H of Frankia alni (strain DSM 45986 / CECT 9034 / ACN14a).